A 325-amino-acid chain; its full sequence is UPF0285 protein Mbar_A0208 (325 aa).

Belongs to the UPF0285 family.

This chain is UPF0285 protein Mbar_A0208, found in Methanosarcina barkeri (strain Fusaro / DSM 804).